The following is an 86-amino-acid chain: Anti-adapter protein IraP (86 aa).

A coiled-coil region spans residues 1–36 (MKNLIAELLLKLAQKEEESKELCAQVEALEIIVTAM).

The protein belongs to the IraP family. In terms of assembly, interacts with RssB.

The protein resides in the cytoplasm. In terms of biological role, inhibits RpoS proteolysis by regulating RssB activity, thereby increasing the stability of the sigma stress factor RpoS especially during phosphate starvation, but also in stationary phase and during nitrogen starvation. Its effect on RpoS stability is due to its interaction with RssB, which probably blocks the interaction of RssB with RpoS, and the consequent delivery of the RssB-RpoS complex to the ClpXP protein degradation pathway. The protein is Anti-adapter protein IraP of Shigella boydii serotype 4 (strain Sb227).